The chain runs to 29 residues: Small toxic protein TisB (29 aa).

Residues 6–28 (IAILILKLIVAALQLLDAVLKYL) traverse the membrane as a helical segment.

The protein localises to the cell inner membrane. In terms of biological role, toxic component of a type I toxin-antitoxin (TA) system. Overexpression causes cessation of growth, induces stress-response, a number of membrane protein genes, and leads to cell death. Inhibits ATP synthesis, ATP levels drop drastically quickly after induction. Part of the programmed response to DNA damage; damage leads to increased accumulation of the protein which slows or stops bacterial growth, probably allowing DNA repair before cells continue to grow. The protein is Small toxic protein TisB (tisB) of Escherichia coli (strain K12).